We begin with the raw amino-acid sequence, 70 residues long: ATP synthase subunit c (70 aa).

Helical transmembrane passes span 4–24 and 47–67; these read IAAG…NGLV and FIGV…ALMV.

It belongs to the ATPase C chain family. As to quaternary structure, F-type ATPases have 2 components, F(1) - the catalytic core - and F(0) - the membrane proton channel. F(1) has five subunits: alpha(3), beta(3), gamma(1), delta(1), epsilon(1). F(0) has three main subunits: a(1), b(2) and c(10-14). The alpha and beta chains form an alternating ring which encloses part of the gamma chain. F(1) is attached to F(0) by a central stalk formed by the gamma and epsilon chains, while a peripheral stalk is formed by the delta and b chains.

The protein resides in the cell membrane. Functionally, f(1)F(0) ATP synthase produces ATP from ADP in the presence of a proton or sodium gradient. F-type ATPases consist of two structural domains, F(1) containing the extramembraneous catalytic core and F(0) containing the membrane proton channel, linked together by a central stalk and a peripheral stalk. During catalysis, ATP synthesis in the catalytic domain of F(1) is coupled via a rotary mechanism of the central stalk subunits to proton translocation. In terms of biological role, key component of the F(0) channel; it plays a direct role in translocation across the membrane. A homomeric c-ring of between 10-14 subunits forms the central stalk rotor element with the F(1) delta and epsilon subunits. In Lactiplantibacillus plantarum (strain ATCC BAA-793 / NCIMB 8826 / WCFS1) (Lactobacillus plantarum), this protein is ATP synthase subunit c.